An 81-amino-acid polypeptide reads, in one-letter code: Small ribosomal subunit protein eS21 (81 aa).

This sequence belongs to the eukaryotic ribosomal protein eS21 family.

This chain is Small ribosomal subunit protein eS21 (RPS21), found in Zea mays (Maize).